The primary structure comprises 166 residues: DNA replication protein 17 (166 aa).

This sequence belongs to the phi29likevirus protein p56 family. As to quaternary structure, homodimer. Interacts with the histone-like protein p6; this interaction optimizes the binding of protein p6 at the viral DNA ends, thus favoring the initiation of replication.

Involved in the replication of viral DNA. It is required at the very beginning of the virus amplification, conditions in which a low number of viral DNA molecules enter the host cell, possibly to recruit the limiting amount of initiation factors at the replication origins. Once the infection process is established and the other replication proteins reach optimal concentration, it becomes dispensable. Optimizes the binding of protein p6 at the viral DNA ends, thus favoring the initiation of replication. The protein is DNA replication protein 17 (17) of Bacillus subtilis (Bacteriophage phi-29).